A 635-amino-acid chain; its full sequence is Biosynthetic arginine decarboxylase (635 aa).

An N6-(pyridoxal phosphate)lysine modification is found at Lys-100. 282–292 (VDIGGGLGVDY) serves as a coordination point for substrate.

The protein belongs to the Orn/Lys/Arg decarboxylase class-II family. SpeA subfamily. Mg(2+) serves as cofactor. Requires pyridoxal 5'-phosphate as cofactor.

The catalysed reaction is L-arginine + H(+) = agmatine + CO2. It participates in amine and polyamine biosynthesis; agmatine biosynthesis; agmatine from L-arginine: step 1/1. In terms of biological role, catalyzes the biosynthesis of agmatine from arginine. This is Biosynthetic arginine decarboxylase from Geobacter sulfurreducens (strain ATCC 51573 / DSM 12127 / PCA).